Here is a 321-residue protein sequence, read N- to C-terminus: Olfactory receptor 3A2 (321 aa).

Topologically, residues 1 to 35 are extracellular; the sequence is MSLQKLMEPEAGTNRTAVAEFILLGLVQTEEMQPV. Asn-14 carries N-linked (GlcNAc...) asparagine glycosylation. The helical transmembrane segment at 36-58 threads the bilayer; the sequence is VFVLLLFAYLVTTGGNLSILAAV. At 59–66 the chain is on the cytoplasmic side; sequence LVEPKLHA. The chain crosses the membrane as a helical span at residues 67–88; it reads PMYFFLGNLSVLDVGCITVTVP. Residues 89–109 are Extracellular-facing; it reads AMLGRLLSHKSTISYDACLSQ. A disulfide bond links Cys-106 and Cys-198. The helical transmembrane segment at 110-129 threads the bilayer; it reads LFFFHLLAGMDCFLLTAMAY. At 130–149 the chain is on the cytoplasmic side; it reads DRLLAICQPLTYSTRMSQTV. The helical transmembrane segment at 150–167 threads the bilayer; that stretch reads QRMLVAASLACAFTNALT. Residues 168–205 lie on the Extracellular side of the membrane; sequence HTVAMSTLNFCGPNEVNHFYCDLPQLFQLSCSSTQLNE. A helical transmembrane segment spans residues 206 to 229; it reads LLLFAVGFIMAGTPLVLIITAYSH. Residues 230–246 lie on the Cytoplasmic side of the membrane; the sequence is VAAAVLRIRSVEGRKKA. The chain crosses the membrane as a helical span at residues 247 to 270; sequence FSTCGSHLTVVCLFFGRGIFNYMR. The Extracellular segment spans residues 271–281; sequence LGSEEASDKDK. A helical transmembrane segment spans residues 282-301; the sequence is GVGVFNTVINPMLNPLIYSL. The Cytoplasmic segment spans residues 302–321; it reads RNPDVQGALWQIFLGRRSLT.

This sequence belongs to the G-protein coupled receptor 1 family.

It is found in the cell membrane. Odorant receptor. This is Olfactory receptor 3A2 (OR3A2) from Homo sapiens (Human).